We begin with the raw amino-acid sequence, 654 residues long: Coiled-coil domain-containing protein 81 (654 aa).

A disordered region spans residues Ser196 to Lys270. Ser206 carries the phosphoserine modification. 2 stretches are compositionally biased toward basic and acidic residues: residues Arg212 to Thr222 and Gly232 to Ala251. A phosphoserine mark is found at Ser273, Ser275, Ser296, and Ser419. Residues Glu293–Arg302 are compositionally biased toward polar residues. A disordered region spans residues Glu293 to Asp318. Positions Ser431 to Arg562 form a coiled coil.

The protein localises to the cytoplasm. The protein resides in the cytoskeleton. It localises to the microtubule organizing center. Its subcellular location is the centrosome. The sequence is that of Coiled-coil domain-containing protein 81 (Ccdc81) from Mus musculus (Mouse).